Consider the following 101-residue polypeptide: Parathymosin (101 aa).

Residues 1–101 are disordered; the sequence is MSEKSVEAAA…RQKTENGASA (101 aa). Ser-2 carries the post-translational modification N-acetylserine. At Ser-2 the chain carries Phosphoserine. At Lys-4 the chain carries N6-acetyllysine. A phosphoserine mark is found at Ser-5 and Ser-13. The segment covering 13–37 has biased composition (basic and acidic residues); sequence SAKDLKEKKDKVEEKAGRKERKKEV. Lys-15 bears the N6-acetyllysine mark. Residues 38 to 74 are compositionally biased toward acidic residues; sequence VEEEENGAEEEEEETAEDGEDDDEGDEEDEEEEEEDE. Thr-52 is subject to Phosphothreonine. At Lys-91 the chain carries N6-acetyllysine.

This sequence belongs to the pro/parathymosin family.

Parathymosin may mediate immune function by blocking the effect of prothymosin alpha which confers resistance to certain opportunistic infections. The sequence is that of Parathymosin (Ptms) from Mus musculus (Mouse).